We begin with the raw amino-acid sequence, 380 residues long: Ribosomal RNA large subunit methyltransferase F (380 aa).

Disordered regions lie at residues 1–54 and 260–279; these read MSHK…PRNA and SQVMSPQVQPSGKVKPATDK. Positions 21-32 are enriched in low complexity; it reads QRQVVSKSSLQK. Residues 44 to 53 are compositionally biased toward basic residues; sequence QKSKALHPRN. The segment covering 260 to 270 has biased composition (low complexity); the sequence is SQVMSPQVQPS.

It belongs to the methyltransferase superfamily. METTL16/RlmF family.

The protein resides in the cytoplasm. It carries out the reaction adenosine(1618) in 23S rRNA + S-adenosyl-L-methionine = N(6)-methyladenosine(1618) in 23S rRNA + S-adenosyl-L-homocysteine + H(+). Its function is as follows. Specifically methylates the adenine in position 1618 of 23S rRNA. This Shewanella pealeana (strain ATCC 700345 / ANG-SQ1) protein is Ribosomal RNA large subunit methyltransferase F.